A 431-amino-acid polypeptide reads, in one-letter code: MRRLRRLVHLVLLCPFSKGLQGRLPGLRVKYVLLVWLGIFVGSWMVYVHYSSYSELCRGHVCQVVICDQYQKGIISGSVCQDLCELQKVEWRTCLSSAPGQQVYSGLWQDKEVTIKCGIEEALNSKAWPDAVPRRELVLFDKPTRGTSIKEFREMTLSFLKANLGDLPSLPALVDQILLMADFNKDSRVSLAEAKSVWALLQRNEFLLLLSLQEKEHASRLLGYCGDLYLTESIPHGSWHGAVLLPALRPLLPSVLHRALQQWFGPAWPWRAKIAIGLLEFVEELFHGSYGTFYMCETTLANVGYTATYDFKMADLQQVAPEATVRRFLQGRHCEQSSDCIYGRDCRAPCDKLMRQCKGDLIQPNLAKVCELLRDYLLPGAPADLYEELGKQLRTCTTLSGLASQVEAHHSLVLSHLKTLLWREISNTNYS.

Residues 1–30 (MRRLRRLVHLVLLCPFSKGLQGRLPGLRVK) are Cytoplasmic-facing. The May mediate ER retention signature appears at 5–6 (RR). The chain crosses the membrane as a helical span at residues 31 to 51 (YVLLVWLGIFVGSWMVYVHYS). The Lumenal segment spans residues 52-431 (SYSELCRGHV…WREISNTNYS (380 aa)). 2 disulfide bridges follow: cysteine 57/cysteine 94 and cysteine 62/cysteine 117.

Belongs to the DIPK family. In terms of processing, among the many cysteines in the lumenal domain, most are probably involved in disulfide bonds.

It is found in the endoplasmic reticulum membrane. The protein is Divergent protein kinase domain 1B of Rattus norvegicus (Rat).